The following is a 352-amino-acid chain: Protein RecA (352 aa).

Residue 67 to 74 participates in ATP binding; that stretch reads GPESSGKT. Positions 330 to 352 are disordered; the sequence is STPKPEAESQEKAAAAQDDDSLV.

The protein belongs to the RecA family.

The protein localises to the cytoplasm. Its function is as follows. Can catalyze the hydrolysis of ATP in the presence of single-stranded DNA, the ATP-dependent uptake of single-stranded DNA by duplex DNA, and the ATP-dependent hybridization of homologous single-stranded DNAs. It interacts with LexA causing its activation and leading to its autocatalytic cleavage. This Chromohalobacter salexigens (strain ATCC BAA-138 / DSM 3043 / CIP 106854 / NCIMB 13768 / 1H11) protein is Protein RecA.